Here is a 1021-residue protein sequence, read N- to C-terminus: Translation initiation factor IF-2 (1021 aa).

Positions 50 to 422 (AFPAEGGSAS…RMGAMVPRGN (373 aa)) are disordered. Positions 57-71 (SASGGRPGGRPGPGN) are enriched in gly residues. Residues 75-95 (PAPPRPGLAPRPGPRPVPGRP) show a composition bias toward pro residues. Residues 96–112 (GPAARPGGPAAPSAPAA) show a composition bias toward low complexity. The segment covering 113-129 (PSAPAPGAPAASPPASQ) has biased composition (pro residues). Composition is skewed to low complexity over residues 130–159 (PRPI…ASGP), 167–178 (GGPAAPGRARPG), and 187–196 (SAPSAPSAGG). Positions 198–208 (RPGPRPGPRPS) are enriched in pro residues. Residues 219–233 (SAGPRQSAGQSGSGP) are compositionally biased toward low complexity. Pro residues-rich tracts occupy residues 234 to 254 (ASPP…PRPG) and 262 to 273 (RPSPGSMPPRPG). Gly residues-rich tracts occupy residues 275–291 (RPGG…GSGG) and 306–389 (GAPG…GGRG). Basic residues predominate over residues 390 to 401 (RPGRQRKSKRAK). The 173-residue stretch at 514–686 (IRPPVVTVMG…IILTADASLD (173 aa)) folds into the tr-type G domain. Positions 523–530 (GHVDHGKT) are G1. A GTP-binding site is contributed by 523–530 (GHVDHGKT). The segment at 548–552 (GITQH) is G2. The tract at residues 573 to 576 (DTPG) is G3. Residues 573-577 (DTPGH) and 627-630 (NKVD) contribute to the GTP site. Residues 627-630 (NKVD) are G4. Positions 663–665 (SAR) are G5.

This sequence belongs to the TRAFAC class translation factor GTPase superfamily. Classic translation factor GTPase family. IF-2 subfamily.

It localises to the cytoplasm. One of the essential components for the initiation of protein synthesis. Protects formylmethionyl-tRNA from spontaneous hydrolysis and promotes its binding to the 30S ribosomal subunits. Also involved in the hydrolysis of GTP during the formation of the 70S ribosomal complex. The protein is Translation initiation factor IF-2 of Frankia alni (strain DSM 45986 / CECT 9034 / ACN14a).